We begin with the raw amino-acid sequence, 450 residues long: MSLRLPSGSRRAGPRPTTGSLRLSGAGASFGAGNACSMPGIGSSFSCAFGSSSSGGNALGGNPCAGFTMNEGGLLSGNEKVTMQNLNDRLASYLENVRALEEANADLEQKIKGWYEKFGPGSCRGLDHDYSRYLPIIEDLKNQIIASTTSNANAVLQIDNARLTADVFRLKYENELALHQSVESDVNGLRRVLDVITLCRTDLEIQYETLSEELTYLKKNHKEEMQVLQCAAGGNVNVEMNAAPGVDLTVLLNNMRAEYEALAEQNRRDAEAWFNEKSASLQQQITEDVGATTSARNELTEMKRNLQTLEIELQSLLATKHSLECSLTETEGNYCAQLAQVQAQIGALEEQLHQVRTETEGQKLEYEQLLDIKVHLEKEIETYCLLIGGDDGACKSGGYKSKDYAAGNMGNQMKDPIRAIVVKKVLEEVDQRSKVLTTRLHSLEEKSQSN.

The segment at Met-1–Ser-24 is disordered. Residues Met-1 to Asn-78 form a head region. The tract at residues Glu-79 to Trp-114 is coil 1A. Residues Glu-79–Cys-394 form the IF rod domain. The linker 1 stretch occupies residues Tyr-115–Ile-136. Residues Ile-137 to Leu-228 are coil 1B. A linker 12 region spans residues Gln-229–Leu-251. The coil 2 stretch occupies residues Leu-252–Asp-390. A tail region spans residues Asp-391–Asn-450. Ser-442 is modified (phosphoserine).

This sequence belongs to the intermediate filament family. Heterodimer of a type I and a type II keratin. Heterodimer with type II keratin KRT5 leading to the formation of keratin intermediate filament (KIF) network. Interacts with KRT6A to form filaments. As to expression, expressed in skin and wool follicle. Expression localized to the inner root sheath of wool follicle.

The protein resides in the cytoplasm. In terms of biological role, essential for the proper assembly of type I and type II keratin protein complexes and formation of keratin intermediate filaments in the inner root sheath (irs). Plays a role in the cytoskeleton organization. The sequence is that of Keratin, type I cytoskeletal 25 from Ovis aries (Sheep).